Here is a 464-residue protein sequence, read N- to C-terminus: IAA-amino acid hydrolase ILR1-like 6 (464 aa).

A signal peptide spans 1–24 (MDNLRKLNLLSVSLTIIFVSLTIA). Mn(2+) is bound by residues Cys175, His177, Glu211, His235, and His433.

Belongs to the peptidase M20 family.

The catalysed reaction is a jasmonyl-L-amino acid + H2O = a jasmonate + an L-alpha-amino acid. Hydrolyzes certain amino acid conjugates of the plant growth regulator indole-3-acetic acid (IAA). Also hydrolyzes amino acid conjugates of jasmonic acid and 12-hydroxy jasmonic acid. The protein is IAA-amino acid hydrolase ILR1-like 6 of Arabidopsis thaliana (Mouse-ear cress).